Reading from the N-terminus, the 155-residue chain is Glutamyl-tRNA(Gln) amidotransferase subunit C, chloroplastic/mitochondrial (155 aa).

The N-terminal 52 residues, 1 to 52 (MATRALLAVIYASPNRCYISPSRIKIQSLTCSSSSHYYQRQSRKNHRIARSY), are a transit peptide targeting the chloroplast and mitochondrion.

It belongs to the GatC family. As to quaternary structure, subunit of the heterotrimeric GatCAB amidotransferase (AdT) complex, composed of A, B and C subunits.

The protein resides in the mitochondrion. The protein localises to the plastid. It is found in the chloroplast. It carries out the reaction L-glutamyl-tRNA(Gln) + L-glutamine + ATP + H2O = L-glutaminyl-tRNA(Gln) + L-glutamate + ADP + phosphate + H(+). Functionally, allows the formation of correctly charged Gln-tRNA(Gln) through the transamidation of misacylated Glu-tRNA(Gln) in chloroplasts and mitochondria. The reaction takes place in the presence of glutamine and ATP through an activated gamma-phospho-Glu-tRNA(Gln). This Arabidopsis thaliana (Mouse-ear cress) protein is Glutamyl-tRNA(Gln) amidotransferase subunit C, chloroplastic/mitochondrial.